The sequence spans 104 residues: uncharacterized protein (104 aa).

Residues 55-104 are disordered; that stretch reads RPFSSDRINRPFSPDKKGEPIFPDKRDRPFSPDRINRPFSPDKKGEPIFP.

It is found in the plastid. This is an uncharacterized protein from Euglena longa (Euglenophycean alga).